The following is a 339-amino-acid chain: MNVEQVKSIDEAMGLAIEHSYQVKGTTYPKPPVGAVIVDPNGRIVGAGGTEPAGGDHAEVVALRRAGGLAAGAIVVVTMEPCNHYGKTPPCVNALIEARVGTVVYAVADPNGIAGGGAGRLSAAGLQVRSGVLAEQVAAGPLREWLHKQRTGLPHVTWKYATSIDGRSAAADGSSQWISSEAARLDLHRRRAIADAILVGTGTVLADDPALTARLADGSLAPQQPLRVVVGKRDIPPEARVLNDEARTMMIRTHEPMEVLRALSDRTDVLLEGGPTLAGAFLRAGAINRILAYVAPILLGGPVTAVDDVGVSNITNALRWQFDSVEKVGPDLLLSLVAR.

The deaminase stretch occupies residues 1–152 (MNVEQVKSID…REWLHKQRTG (152 aa)). The 123-residue stretch at 7–129 (KSIDEAMGLA…RLSAAGLQVR (123 aa)) folds into the CMP/dCMP-type deaminase domain. Position 57 (histidine 57) interacts with Zn(2+). Glutamate 59 (proton donor) is an active-site residue. 2 residues coordinate Zn(2+): cysteine 82 and cysteine 91. The segment at 153–339 (LPHVTWKYAT…PDLLLSLVAR (187 aa)) is reductase. NADP(+)-binding positions include alanine 161 and 168–171 (SAAA). Residue serine 175 participates in substrate binding. Tryptophan 177 is an NADP(+) binding site. Arginine 191 is a substrate binding site. Positions 203 and 207 each coordinate NADP(+). Leucine 211, arginine 214, and glutamate 272 together coordinate substrate. 274 to 280 (GPTLAGA) contributes to the NADP(+) binding site.

The protein in the N-terminal section; belongs to the cytidine and deoxycytidylate deaminase family. It in the C-terminal section; belongs to the HTP reductase family. Zn(2+) serves as cofactor.

It catalyses the reaction 2,5-diamino-6-hydroxy-4-(5-phosphoribosylamino)-pyrimidine + H2O + H(+) = 5-amino-6-(5-phospho-D-ribosylamino)uracil + NH4(+). It carries out the reaction 5-amino-6-(5-phospho-D-ribitylamino)uracil + NADP(+) = 5-amino-6-(5-phospho-D-ribosylamino)uracil + NADPH + H(+). The protein operates within cofactor biosynthesis; riboflavin biosynthesis; 5-amino-6-(D-ribitylamino)uracil from GTP: step 2/4. It functions in the pathway cofactor biosynthesis; riboflavin biosynthesis; 5-amino-6-(D-ribitylamino)uracil from GTP: step 3/4. In terms of biological role, converts 2,5-diamino-6-(ribosylamino)-4(3h)-pyrimidinone 5'-phosphate into 5-amino-6-(ribosylamino)-2,4(1h,3h)-pyrimidinedione 5'-phosphate. The sequence is that of Riboflavin biosynthesis protein RibD (ribD) from Mycobacterium tuberculosis (strain CDC 1551 / Oshkosh).